Consider the following 263-residue polypeptide: uncharacterized protein (263 aa).

Alanine 16–threonine 23 contacts ATP.

It to M.jannaschii MJ0547 and MJ0169.

This is an uncharacterized protein from Methanocaldococcus jannaschii (strain ATCC 43067 / DSM 2661 / JAL-1 / JCM 10045 / NBRC 100440) (Methanococcus jannaschii).